A 390-amino-acid polypeptide reads, in one-letter code: Stearoyl-[acyl-carrier-protein] 9-desaturase 5, chloroplastic (390 aa).

Positions Met-1–Ser-22 are disordered. The N-terminal 31 residues, Met-1 to Met-31, are a transit peptide targeting the chloroplast. The Fe cation site is built by Glu-132, Glu-170, His-173, Glu-223, Glu-256, and His-259.

This sequence belongs to the fatty acid desaturase type 2 family. Homodimer. Fe(2+) is required as a cofactor.

Its subcellular location is the plastid. It is found in the chloroplast. The enzyme catalyses octadecanoyl-[ACP] + 2 reduced [2Fe-2S]-[ferredoxin] + O2 + 2 H(+) = (9Z)-octadecenoyl-[ACP] + 2 oxidized [2Fe-2S]-[ferredoxin] + 2 H2O. Its pathway is lipid metabolism; fatty acid metabolism. Converts stearoyl-ACP to oleoyl-ACP by introduction of a cis double bond between carbons 9 and 10 of the acyl chain. This Oryza sativa subsp. japonica (Rice) protein is Stearoyl-[acyl-carrier-protein] 9-desaturase 5, chloroplastic.